Consider the following 117-residue polypeptide: Large ribosomal subunit protein bL20 (117 aa).

The protein belongs to the bacterial ribosomal protein bL20 family.

Binds directly to 23S ribosomal RNA and is necessary for the in vitro assembly process of the 50S ribosomal subunit. It is not involved in the protein synthesizing functions of that subunit. The sequence is that of Large ribosomal subunit protein bL20 from Rippkaea orientalis (strain PCC 8801 / RF-1) (Cyanothece sp. (strain PCC 8801)).